Consider the following 107-residue polypeptide: NADH-quinone oxidoreductase subunit K (107 aa).

The next 3 helical transmembrane spans lie at 9–29 (IGVN…MFAV), 36–56 (IVIL…FLTF), and 68–88 (FSLF…AIVI).

This sequence belongs to the complex I subunit 4L family. In terms of assembly, NDH-1 is composed of 14 different subunits. Subunits NuoA, H, J, K, L, M, N constitute the membrane sector of the complex.

The protein resides in the cell inner membrane. It catalyses the reaction a quinone + NADH + 5 H(+)(in) = a quinol + NAD(+) + 4 H(+)(out). NDH-1 shuttles electrons from NADH, via FMN and iron-sulfur (Fe-S) centers, to quinones in the respiratory chain. The immediate electron acceptor for the enzyme in this species is believed to be a menaquinone. Couples the redox reaction to proton translocation (for every two electrons transferred, four hydrogen ions are translocated across the cytoplasmic membrane), and thus conserves the redox energy in a proton gradient. This is NADH-quinone oxidoreductase subunit K from Chlorobaculum tepidum (strain ATCC 49652 / DSM 12025 / NBRC 103806 / TLS) (Chlorobium tepidum).